The chain runs to 817 residues: Leucine--tRNA ligase (817 aa).

The 'HIGH' region signature appears at 51–61 (PYPSGDLHVGH). Positions 588–592 (RMSKS) match the 'KMSKS' region motif. Lys-591 serves as a coordination point for ATP.

It belongs to the class-I aminoacyl-tRNA synthetase family.

It localises to the cytoplasm. It catalyses the reaction tRNA(Leu) + L-leucine + ATP = L-leucyl-tRNA(Leu) + AMP + diphosphate. In Rubrobacter xylanophilus (strain DSM 9941 / JCM 11954 / NBRC 16129 / PRD-1), this protein is Leucine--tRNA ligase.